The primary structure comprises 128 residues: Gas vesicle protein O (128 aa).

The interval 1-49 is disordered; it reads MANTPEDTQNTQNDSQNDSQNDSQKDTSARATSARAHQQPQEQPPSPMR. Low complexity predominate over residues 7 to 22; sequence DTQNTQNDSQNDSQND. The span at 29–41 shows a compositional bias: polar residues; sequence ARATSARAHQQPQ.

This sequence belongs to the gas vesicle GvpO family.

Its subcellular location is the gas vesicle. In terms of biological role, a minor component of the gas vesicle. May play a role in transcription and/or RNA stability and in GV assembly. Gas vesicles are hollow, gas filled proteinaceous nanostructures found in some microorganisms. It is not clear what function gas vesicles perform in soil bacteria. This chain is Gas vesicle protein O, found in Streptomyces sp. (strain CB03234).